The primary structure comprises 385 residues: Succinate--CoA ligase [ADP-forming] subunit beta (385 aa).

The ATP-grasp domain maps to 9–241 (KELLRDFGIN…IDEEEPSELE (233 aa)). Residues lysine 46, 53-55 (GRG), glutamate 99, threonine 102, and glutamate 107 each bind ATP. Asparagine 196 and aspartate 210 together coordinate Mg(2+). Substrate contacts are provided by residues asparagine 261 and 318–320 (GIV).

It belongs to the succinate/malate CoA ligase beta subunit family. In terms of assembly, heterotetramer of two alpha and two beta subunits. Requires Mg(2+) as cofactor.

It carries out the reaction succinate + ATP + CoA = succinyl-CoA + ADP + phosphate. The catalysed reaction is GTP + succinate + CoA = succinyl-CoA + GDP + phosphate. Its pathway is carbohydrate metabolism; tricarboxylic acid cycle; succinate from succinyl-CoA (ligase route): step 1/1. Functionally, succinyl-CoA synthetase functions in the citric acid cycle (TCA), coupling the hydrolysis of succinyl-CoA to the synthesis of either ATP or GTP and thus represents the only step of substrate-level phosphorylation in the TCA. The beta subunit provides nucleotide specificity of the enzyme and binds the substrate succinate, while the binding sites for coenzyme A and phosphate are found in the alpha subunit. In Campylobacter fetus subsp. fetus (strain 82-40), this protein is Succinate--CoA ligase [ADP-forming] subunit beta.